The chain runs to 266 residues: Glutamate racemase (266 aa).

Substrate-binding positions include 9-10 and 41-42; these read DS and YG. Cys-72 acts as the Proton donor/acceptor in catalysis. Residue 73–74 coordinates substrate; that stretch reads NT. Residue Cys-184 is the Proton donor/acceptor of the active site. Position 185–186 (185–186) interacts with substrate; that stretch reads TH.

The protein belongs to the aspartate/glutamate racemases family. Homodimer.

It catalyses the reaction L-glutamate = D-glutamate. It participates in cell wall biogenesis; peptidoglycan biosynthesis. Provides the (R)-glutamate required for cell wall biosynthesis. This is Glutamate racemase from Staphylococcus aureus (strain MRSA252).